Here is a 375-residue protein sequence, read N- to C-terminus: F420-dependent formate dehydrogenase 2 subunit beta (375 aa).

2 4Fe-4S ferredoxin-type domains span residues 268–291 (PEPEKWDEYWSRCIKCYGCRDVCP) and 320–349 (IRLSHMSFSCINCGQCEDVCPVEIPLAKIY). [4Fe-4S] cluster contacts are provided by cysteine 280, cysteine 283, cysteine 286, cysteine 290, cysteine 329, cysteine 332, cysteine 335, and cysteine 339.

It belongs to the FrhB family. Dimer of an alpha (FdhA2) and a beta (FdhB2) subunit. The cofactor is [4Fe-4S] cluster. FAD is required as a cofactor. It depends on Zn(2+) as a cofactor.

The enzyme catalyses oxidized coenzyme F420-(gamma-L-Glu)(n) + formate + 2 H(+) = reduced coenzyme F420-(gamma-L-Glu)(n) + CO2. Catalyzes the oxidation of formate to carbon dioxide, with coenzyme F420 as the electron acceptor. In vitro can also use methyl viologen as electron acceptor. The polypeptide is F420-dependent formate dehydrogenase 2 subunit beta (Methanococcus maripaludis (strain DSM 14266 / JCM 13030 / NBRC 101832 / S2 / LL)).